Here is a 121-residue protein sequence, read N- to C-terminus: uncharacterized protein (121 aa).

The first 31 residues, 1–31, serve as a signal peptide directing secretion; that stretch reads MILNNKGFIRILEATIAGIMVILVFSYLVMS.

It to B.burgdorferi BB0465 N-terminal region.

This is an uncharacterized protein from Methanocaldococcus jannaschii (strain ATCC 43067 / DSM 2661 / JAL-1 / JCM 10045 / NBRC 100440) (Methanococcus jannaschii).